The primary structure comprises 607 residues: V-type proton ATPase catalytic subunit A (607 aa).

Residue 251–258 (GAFGCGKT) coordinates ATP.

This sequence belongs to the ATPase alpha/beta chains family. V-ATPase is a heteromultimeric enzyme composed of a peripheral catalytic V1 complex (components A to H) attached to an integral membrane V0 proton pore complex (components: a, c, c', c'', d, e, f and VOA1).

The protein localises to the vacuole membrane. The catalysed reaction is ATP + H2O + 4 H(+)(in) = ADP + phosphate + 5 H(+)(out). Functionally, catalytic subunit of the V1 complex of vacuolar(H+)-ATPase (V-ATPase), a multisubunit enzyme composed of a peripheral complex (V1) that hydrolyzes ATP and a membrane integral complex (V0) that translocates protons. V-ATPase is responsible for acidifying and maintaining the pH of intracellular compartments. In Encephalitozoon cuniculi (strain GB-M1) (Microsporidian parasite), this protein is V-type proton ATPase catalytic subunit A (VMA1).